The following is a 2000-amino-acid chain: Sodium channel protein type 3 subunit alpha (2000 aa).

Topologically, residues 1-128 are cytoplasmic; the sequence is MAQALLVPPG…KIAIKILVHS (128 aa). The tract at residues 28–60 is disordered; sequence RAAEEKAKKPKKEQDNDDENKPKPNSDLEAGKN. A compositionally biased stretch (basic and acidic residues) spans 46 to 57; it reads ENKPKPNSDLEA. One copy of the I repeat lies at 110–455; that stretch reads ILTPLNPVRK…QQMLEQLKKQ (346 aa). Residues 129 to 146 traverse the membrane as a helical segment; it reads LFSMLIMCTILTNCVFMT. At 147-152 the chain is on the extracellular side; it reads LSNPPD. Residues 153-174 form a helical membrane-spanning segment; that stretch reads WTKNVEYTFTGIYTFESLIKIL. The Cytoplasmic portion of the chain corresponds to 175–188; that stretch reads ARGFCLEDFTFLRD. A helical transmembrane segment spans residues 189–206; that stretch reads PWNWLDFSVIVMAYVTEF. Residues 207–213 lie on the Extracellular side of the membrane; it reads VSLGNVS. Residue N211 is glycosylated (N-linked (GlcNAc...) asparagine). Residues 214–235 traverse the membrane as a helical segment; that stretch reads ALRTFRVLRALKTISVIPGLKT. Residues 236 to 249 are Cytoplasmic-facing; it reads IVGALIQSVKKLSD. The chain crosses the membrane as a helical span at residues 250 to 269; it reads VMILTVFCLSVFALIGLQLF. The Extracellular portion of the chain corresponds to 270–369; the sequence is MGNLRNKCLQ…NYGYTSFDTF (100 aa). N-linked (GlcNAc...) asparagine glycans are attached at residues N290, N296, N302, N307, and N339. The pore-forming intramembrane region spans 370-386; sequence SWAFLSLFRLMTQDYWE. Topologically, residues 387-397 are extracellular; it reads NLYQLTLRAAG. The chain crosses the membrane as a helical span at residues 398–424; it reads KTYMIFFVLVIFLGSFYLVNLILAVVA. Residues 425-761 lie on the Cytoplasmic side of the membrane; sequence MAYEEQNQAT…LVNLIVMDPF (337 aa). S484, S485, and S486 each carry phosphoserine. Disordered regions lie at residues 493 to 528, 587 to 631, and 662 to 681; these read SKSA…KSES, VGSE…ASMS, and ALTS…ETEV. Residues 500 to 509 show a composition bias toward basic residues; sequence RNRRKKRRQR. Basic and acidic residues-rich tracts occupy residues 510 to 528 and 596 to 610; these read EHLE…KSES and DEHS…RRDS. Positions 662–678 are enriched in polar residues; sequence ALTSPTGQLPPEGTTTE. An II repeat occupies 742–1014; that stretch reads CCDAWLKVKH…QIAVGRMQKG (273 aa). A helical transmembrane segment spans residues 762–779; the sequence is VDLAITICIVLNTLFMAM. Over 780-787 the chain is Extracellular; the sequence is EHYPMTEQ. A helical transmembrane segment spans residues 788–812; that stretch reads FSSVLTVGNLVFTGIFTAEMVLKII. Residues 813-822 lie on the Cytoplasmic side of the membrane; the sequence is AMDPYYYFQE. The chain crosses the membrane as a helical span at residues 823-842; that stretch reads GWNIFDGIIVSLSLMELGLS. The Extracellular segment spans residues 843-846; that stretch reads NVEG. Residues 847-865 traverse the membrane as a helical segment; that stretch reads LSVLRSFRLLRVFKLAKSW. Over 866–883 the chain is Cytoplasmic; that stretch reads PTLNMLIKIIGNSVGALG. The chain crosses the membrane as a helical span at residues 884–904; it reads NLTLVLAIIVFIFAVVGMQLF. Residues 905-929 are Extracellular-facing; the sequence is GKSYKECVCKINDDCTLPRWHMNDF. Cysteines 913 and 919 form a disulfide. Positions 930-945 form an intramembrane region, pore-forming; the sequence is FHSFLIVFRVLCGEWI. The Extracellular portion of the chain corresponds to 946 to 956; that stretch reads ETMWDCMEVAG. C951 and C960 are disulfide-bonded. The helical transmembrane segment at 957–983 threads the bilayer; sequence QTMCLIVFMLVMVIGNLVVLNLFLALL. Over 984–1205 the chain is Cytoplasmic; it reads LSSFSSDNLA…RKTCYSIVEH (222 aa). The tract at residues 1118–1162 is disordered; it reads EEFSSESELEESKEKLNATSSSEGSTVDVVLPREGEQAETEPEED. The III repeat unit spans residues 1188–1499; that stretch reads KGKIWWNLRK…KKYYNAMKKL (312 aa). Residues 1206 to 1226 form a helical membrane-spanning segment; sequence NWFETFIVFMILLSSGALAFE. Residues 1227-1238 lie on the Extracellular side of the membrane; sequence DIYIEQRKTIKT. Residues 1239–1260 traverse the membrane as a helical segment; sequence MLEYADKVFTYIFILEMLLKWV. The Cytoplasmic portion of the chain corresponds to 1261–1266; that stretch reads AYGFQT. A helical transmembrane segment spans residues 1267 to 1292; the sequence is YFTNAWCWLDFLIVDVSLVSLVANAL. The Extracellular portion of the chain corresponds to 1293-1301; it reads GYSELGAIK. A helical membrane pass occupies residues 1302–1320; it reads SLRTLRALRPLRALSRFEG. Over 1321-1333 the chain is Cytoplasmic; sequence MRVVVNALVGAIP. Residues 1334-1356 form a helical membrane-spanning segment; the sequence is SIMNVLLVCLIFWLIFSIMGVNL. The Extracellular portion of the chain corresponds to 1357-1402; that stretch reads FAGKFYHCVNMTTGNMFDISDVNNLSDCQALGKQARWKNVKVNFDN. Residues C1364 and C1384 are joined by a disulfide bond. N-linked (GlcNAc...) asparagine glycosylation is found at N1366 and N1380. Positions 1403 to 1419 form an intramembrane region, pore-forming; it reads VGAGYLALLQVATFKGW. Topologically, residues 1420 to 1442 are extracellular; the sequence is MDIMYAAVDSRDVKLQPVYEENL. A helical membrane pass occupies residues 1443–1468; it reads YMYLYFVIFIIFGSFFTLNLFIGVII. Topologically, residues 1469 to 1526 are cytoplasmic; the sequence is DNFNQQKKKFGGQDIFMTEEQKKYYNAMKKLGSKKPQKPIPRPANKFQGMVFDFVTRQ. The residue at position 1501 (S1501) is a Phosphoserine; by PKC. One copy of the IV repeat lies at 1508–1806; sequence IPRPANKFQG…WEKFDPDATQ (299 aa). A helical transmembrane segment spans residues 1527–1545; it reads VFDISIMILICLNMVTMMV. Residues 1546 to 1553 lie on the Extracellular side of the membrane; the sequence is ETDDQGKY. A helical transmembrane segment spans residues 1554–1577; sequence MTLVLSRINLVFIVLFTGEFVLKL. Residues 1578-1587 lie on the Cytoplasmic side of the membrane; sequence VSLRHYYFTI. Residues 1588 to 1605 traverse the membrane as a helical segment; it reads GWNIFDFVVVILSIVGMF. At 1606–1617 the chain is on the extracellular side; sequence LAEMIEKYFVSP. A helical transmembrane segment spans residues 1618 to 1640; sequence TLFRVIRLARIGRILRLIKGAKG. At 1641–1653 the chain is on the cytoplasmic side; it reads IRTLLFALMMSLP. The chain crosses the membrane as a helical span at residues 1654-1677; that stretch reads ALFNIGLLLFLVMFIYAIFGMSNF. Over 1678–1699 the chain is Extracellular; that stretch reads AYVKKEAGIDDMFNFETFGNSM. The pore-forming intramembrane region spans 1700-1712; sequence ICLFQITTSAGWD. Residues 1713–1744 are Extracellular-facing; sequence GLLAPILNSAPPDCDPDTIHPGSSVKGDCGNP. Residues 1745-1770 form a helical membrane-spanning segment; sequence SVGIFFFVSYIIISFLVVVNMYIAVI. Over 1771–2000 the chain is Cytoplasmic; that stretch reads LENFSVATEE…KGKEVRENQK (230 aa). Residues 1900–1929 enclose the IQ domain; that stretch reads EEVSAAIIQRNFRCYLLKQRLKNISSNYNK. Residues 1949 to 2000 form a disordered region; that stretch reads LNGNSTPEKTDGSSSTTSPPSYDSVTKPDKEKFEKDKPEKESKGKEVRENQK. Residues 1974-2000 are compositionally biased toward basic and acidic residues; sequence TKPDKEKFEKDKPEKESKGKEVRENQK.

This sequence belongs to the sodium channel (TC 1.A.1.10) family. Nav1.3/SCN3A subfamily. In terms of assembly, heterooligomer of an alpha subunit, SCN3A, and 1 to 3 regulatory beta subunits including SCN1B and SCN2B; disulfide-linked with some beta subunits like SCN2B. Interacts with NEDD4L; could regulate expression of SCN3A at the plasma membrane through ubiquitination-regulated endocytosis. Interacts with the conotoxin GVIIJ. May be ubiquitinated by NEDD4L; which would promote its endocytosis. In terms of processing, phosphorylation at Ser-1501 by PKC in a highly conserved cytoplasmic loop slows inactivation of the sodium channel and reduces peak sodium currents. Expressed in enterochromaffin cells in both colon and small bowel (at protein level).

The protein localises to the cell membrane. Its subcellular location is the basal cell membrane. It carries out the reaction Na(+)(in) = Na(+)(out). Functionally, pore-forming subunit of Nav1.3, a voltage-gated sodium (Nav) channel that directly mediates the depolarizing phase of action potentials in excitable membranes. Navs, also called VGSCs (voltage-gated sodium channels) or VDSCs (voltage-dependent sodium channels), operate by switching between closed and open conformations depending on the voltage difference across the membrane. In the open conformation they allow Na(+) ions to selectively pass through the pore, along their electrochemical gradient. The influx of Na+ ions provokes membrane depolarization, initiating the propagation of electrical signals throughout cells and tissues. In some secretory cell types, it also participates in cell excitability through membrane depolarization and regulates cells responsiveness to stimuli triggering secretion. For instance, it controls the release of serotonin/5-hydroxytryptamine by enterochromaffin cells and is required for both glucagon- and glucose-induced insulin secretion in pancreatic endocrine cells. The chain is Sodium channel protein type 3 subunit alpha from Homo sapiens (Human).